The primary structure comprises 306 residues: Protodermal factor 1 (306 aa).

Residues 1-23 (MRGMVSFAVWALFAALLSQQLFA) form the signal peptide. Over residues 40-56 (PPSGSHGTPPSHTPPSS) the composition is skewed to low complexity. The interval 40 to 156 (PPSGSHGTPP…VVTPPSPIVD (117 aa)) is disordered. The segment covering 62–83 (PYDPSPSTPSHPSPPSHTPTPS) has biased composition (pro residues). Positions 84–99 (TPSHTPTPHTPSHTPT) are enriched in low complexity. The span at 139 to 154 (SPPPRTPVVVTPPSPI) shows a compositional bias: pro residues.

In terms of tissue distribution, confined to the shoot apical meristem (SAM) at the layer L1 in vegetative, infloresence and floral meristems, as well as in protoderm of organ primordia, including during embryogenesis. Also present in the tip of emerging lateral root primordia.

May be involved in the regulation of meristem growth. This chain is Protodermal factor 1 (PDF1), found in Arabidopsis thaliana (Mouse-ear cress).